The primary structure comprises 393 residues: Probable acetyl-CoA acyltransferase (393 aa).

The active-site Acyl-thioester intermediate is C88. Residues H349 and C378 each act as proton acceptor in the active site.

The protein belongs to the thiolase-like superfamily. Thiolase family.

The protein localises to the cytoplasm. The enzyme catalyses 2 acetyl-CoA = acetoacetyl-CoA + CoA. The sequence is that of Probable acetyl-CoA acyltransferase from Staphylococcus aureus (strain NCTC 8325 / PS 47).